The primary structure comprises 90 residues: Small ribosomal subunit protein bS18 (90 aa).

Residues 1-24 are disordered; it reads MKPMRQKPGRGQGNKSISNALASK.

It belongs to the bacterial ribosomal protein bS18 family. Part of the 30S ribosomal subunit. Forms a tight heterodimer with protein bS6.

Its function is as follows. Binds as a heterodimer with protein bS6 to the central domain of the 16S rRNA, where it helps stabilize the platform of the 30S subunit. In Chlorobium phaeovibrioides (strain DSM 265 / 1930) (Prosthecochloris vibrioformis (strain DSM 265)), this protein is Small ribosomal subunit protein bS18.